An 804-amino-acid chain; its full sequence is Probable exo-1,4-beta-xylosidase xlnD (804 aa).

The N-terminal stretch at 1–26 (MAHSMSRPVAATAAALLALALPQALA) is a signal peptide. 5 N-linked (GlcNAc...) asparagine glycosylation sites follow: Asn29, Asn124, Asn148, Asn242, and Asn251. The active site involves Asp315. 10 N-linked (GlcNAc...) asparagine glycosylation sites follow: Asn357, Asn390, Asn413, Asn444, Asn455, Asn573, Asn576, Asn665, Asn696, and Asn718.

The protein belongs to the glycosyl hydrolase 3 family.

The protein localises to the secreted. The catalysed reaction is Hydrolysis of (1-&gt;4)-beta-D-xylans, to remove successive D-xylose residues from the non-reducing termini.. The protein operates within glycan degradation; xylan degradation. Its function is as follows. Xylan 1,4-beta-xylosidase involved in the hydrolysis of xylan, a major structural heterogeneous polysaccharide found in plant biomass representing the second most abundant polysaccharide in the biosphere, after cellulose. The polypeptide is Probable exo-1,4-beta-xylosidase xlnD (xlnD) (Aspergillus niger (strain ATCC MYA-4892 / CBS 513.88 / FGSC A1513)).